The sequence spans 365 residues: Class I histocompatibility antigen, Gogo-A*0501 alpha chain (365 aa).

Positions 1 to 24 (MAVVAPRTLLLLLSGALALTQTWA) are cleaved as a signal peptide. The tract at residues 25–114 (GSHSMRYFST…ALRYYNQSED (90 aa)) is alpha-1. Residues 25–308 (GSHSMRYFST…EPSSQPTIPI (284 aa)) lie on the Extracellular side of the membrane. N-linked (GlcNAc...) asparagine glycosylation occurs at N110. Residues 115-206 (GSHTIQRMYG…ENGKETLQRT (92 aa)) form an alpha-2 region. Cystine bridges form between C125–C188 and C227–C283. The tract at residues 207–298 (DAPKTHTTHQ…GLPKPLTLRW (92 aa)) is alpha-3. The Ig-like C1-type domain occupies 209-295 (PKTHTTHQAV…QHEGLPKPLT (87 aa)). Positions 299–308 (EPSSQPTIPI) are connecting peptide. Residues 309 to 332 (VGIIAGLVLFGAVIAGAVVAAVRW) traverse the membrane as a helical segment. The Cytoplasmic segment spans residues 333-365 (RRKSSDRKGGSYSQAASSDSAQGSDVSLTACKV). Residues 338–365 (DRKGGSYSQAASSDSAQGSDVSLTACKV) form a disordered region. The span at 342 to 359 (GSYSQAASSDSAQGSDVS) shows a compositional bias: low complexity. Phosphoserine is present on S343. Position 344 is a phosphotyrosine (Y344). A phosphoserine mark is found at S345, S349, S352, S356, and S359.

Belongs to the MHC class I family. In terms of assembly, heterodimer of an alpha chain and a beta chain (beta-2-microglobulin).

It is found in the membrane. In terms of biological role, involved in the presentation of foreign antigens to the immune system. In Gorilla gorilla gorilla (Western lowland gorilla), this protein is Class I histocompatibility antigen, Gogo-A*0501 alpha chain.